The sequence spans 380 residues: Phosphate acyltransferase (380 aa).

Positions 1–23 (MPSPPPTPETATASDRTATPAPG) are disordered.

It belongs to the PlsX family. As to quaternary structure, homodimer. Probably interacts with PlsY.

The protein localises to the cytoplasm. It catalyses the reaction a fatty acyl-[ACP] + phosphate = an acyl phosphate + holo-[ACP]. It functions in the pathway lipid metabolism; phospholipid metabolism. In terms of biological role, catalyzes the reversible formation of acyl-phosphate (acyl-PO(4)) from acyl-[acyl-carrier-protein] (acyl-ACP). This enzyme utilizes acyl-ACP as fatty acyl donor, but not acyl-CoA. This chain is Phosphate acyltransferase, found in Acidiphilium cryptum (strain JF-5).